Consider the following 456-residue polypeptide: Alcohol acyltransferase 1 (456 aa).

Active-site proton acceptor residues include His-166 and Asp-382.

The protein belongs to the plant acyltransferase family.

Involved in the biosynthesis of volatile esters which confer kiwifruit flavor. Alcohol acyl transferase that can use a wide range of alcohols as substrate to produce esters. In Actinidia chinensis var. chinensis (Chinese soft-hair kiwi), this protein is Alcohol acyltransferase 1.